The sequence spans 791 residues: Pleckstrin homology domain-containing family H member 3 (791 aa).

An N-terminal signal peptide occupies residues 1 to 18; it reads MPLPGGLWWLLCCRRGFT. The span at 29 to 41 shows a compositional bias: acidic residues; sequence LSGDGDEDEDDET. A disordered region spans residues 29 to 71; the sequence is LSGDGDEDEDDETFELRSPSPAGGGRGSLDVTLTQPTRNGPIT. At Ser30 the chain carries Phosphoserine. Polar residues predominate over residues 59–71; that stretch reads VTLTQPTRNGPIT. The 105-residue stretch at 95–199 folds into the PH domain; that stretch reads DVIVKGWLYR…WGVALREVIA (105 aa). Positions 237 to 399 constitute a MyTH4 domain; the sequence is HTSSALYAPL…PSLAEISALS (163 aa). In terms of domain architecture, FERM spans 404 to 755; it reads LLCTVHCPGA…ANPSPERPCS (352 aa). Positions 549–559 are enriched in low complexity; that stretch reads PRGPLPLLDRL. 2 disordered regions span residues 549-580 and 593-623; these read PRGPLPLLDRLMPPPAPPREQPSRPARRPPPS and LAKRRAERARRIGTGRSTESTAQVGGGGGGS. Residues 594–605 show a composition bias toward basic residues; the sequence is AKRRAERARRIG. Position 636 is an omega-N-methylarginine (Arg636). Residues 748 to 791 form a disordered region; the sequence is PSPERPCSSSGPPSQDLSDTSPPSQHQVLEKPQGQSGCLRQLQD. The segment covering 754 to 791 has biased composition (polar residues); that stretch reads CSSSGPPSQDLSDTSPPSQHQVLEKPQGQSGCLRQLQD.

The chain is Pleckstrin homology domain-containing family H member 3 (Plekhh3) from Rattus norvegicus (Rat).